The primary structure comprises 154 residues: Ribonuclease K6 (154 aa).

The signal sequence occupies residues 1–27; that stretch reads MGPHLLGRSSLLLLLLGMWWSVRPLCA. H42 (proton acceptor) is an active-site residue. Intrachain disulfides connect C50–C108, C64–C118, C82–C133, and C89–C96. Residue N59 is glycosylated (N-linked (GlcNAc...) asparagine). Residues 65–69 and K90 contribute to the substrate site; that span reads KPENT. The N-linked (GlcNAc...) asparagine glycan is linked to N104. The Proton donor role is filled by H149.

It belongs to the pancreatic ribonuclease family. Interacts (via N-terminus) with bacterial lipopolysaccharide (LPS). In terms of tissue distribution, kidney (at protein level).

It localises to the secreted. The protein localises to the lysosome. It is found in the cytoplasmic granule. Its function is as follows. Ribonuclease which shows a preference for the pyrimidines uridine and cytosine. Has potent antimicrobial activity against a range of Gram-positive and Gram-negative bacteria, including P.aeruginosa, A.baumanii, M.luteus, S.aureus, E.faecalis, E.faecium, S.saprophyticus and E.coli. Causes loss of bacterial membrane integrity, and also promotes agglutination of Gram-negative bacteria. Probably contributes to urinary tract sterility. Bactericidal activity is independent of RNase activity. This Bos taurus (Bovine) protein is Ribonuclease K6 (RNASE6).